The following is a 318-amino-acid chain: Transaldolase (318 aa).

The Schiff-base intermediate with substrate role is filled by Lys132.

It belongs to the transaldolase family. Type 1 subfamily. Homodimer.

Its subcellular location is the cytoplasm. It carries out the reaction D-sedoheptulose 7-phosphate + D-glyceraldehyde 3-phosphate = D-erythrose 4-phosphate + beta-D-fructose 6-phosphate. The protein operates within carbohydrate degradation; pentose phosphate pathway; D-glyceraldehyde 3-phosphate and beta-D-fructose 6-phosphate from D-ribose 5-phosphate and D-xylulose 5-phosphate (non-oxidative stage): step 2/3. Functionally, transaldolase is important for the balance of metabolites in the pentose-phosphate pathway. This Shewanella sp. (strain MR-7) protein is Transaldolase.